A 375-amino-acid polypeptide reads, in one-letter code: MSESAPTPRRERVIVGMSGGVDSSVSALLLLQQGYQVEGLFMKNWDEDDGTEYCTAREDLADAQAVCDRIGIKLHTANFAAEYWDNVFEHFLAEYKAGRTPNPDILCNREIKFKAFLDYALMLGADLIATGHYVRRRDRDGRTELLKGLDPNKDQSYFLHAVGGEQIARSLFPVGELEKPEVRAIAEKHGLATAKKKDSTGICFIGERRFTDFLKQYLPAQPGDIETTEGKVIGRHSGLMYHTIGQRQGLGIGGLKEAGDDPWYVLGKDLQRNVLLVGQGNDHPLLFSRALLASRIYWVNPVELERPRRLRAKVRYRQSDQDCVLEKTAEGYRAVFDEPQRAVTPGQSVVFYDGDVCLGGGVIETAEAWDFGGRP.

ATP-binding positions include 16 to 23 (GMSGGVDS) and Met-42. The interval 102 to 104 (NPD) is interaction with target base in tRNA. Cys-107 acts as the Nucleophile in catalysis. Cysteines 107 and 203 form a disulfide. Gly-131 is an ATP binding site. The interval 153–155 (KDQ) is interaction with tRNA. Residue Cys-203 is the Cysteine persulfide intermediate of the active site. The tract at residues 315 to 316 (RY) is interaction with tRNA.

The protein belongs to the MnmA/TRMU family.

Its subcellular location is the cytoplasm. The enzyme catalyses S-sulfanyl-L-cysteinyl-[protein] + uridine(34) in tRNA + AH2 + ATP = 2-thiouridine(34) in tRNA + L-cysteinyl-[protein] + A + AMP + diphosphate + H(+). Catalyzes the 2-thiolation of uridine at the wobble position (U34) of tRNA, leading to the formation of s(2)U34. In Pseudomonas aeruginosa (strain UCBPP-PA14), this protein is tRNA-specific 2-thiouridylase MnmA.